The chain runs to 450 residues: IMP-specific 5'-nucleotidase 1 (450 aa).

His144 lines the ATP pocket. Asp172 functions as the Nucleophile in the catalytic mechanism. IMP-binding residues include Asp172, Asp174, Asp180, Thr208, Asp376, and Lys384. Asp172 and Asp174 together coordinate Mg(2+). Residue Asp174 is the Proton donor of the active site. Asp411 provides a ligand contact to Mg(2+).

The protein belongs to the ISN1 family. As to quaternary structure, homotetramer. Mg(2+) serves as cofactor.

The catalysed reaction is IMP + H2O = inosine + phosphate. Allosterically activated by ATP. ATP binding is a prerequisite to magnesium and substrate binding. ATP binds to 2 of the subunits in the homotetramer inducing a closure of these 2 subunits and the release of the C-terminal loop, thereby activating the enzyme. Functionally, IMP-specific 5'-nucleotidase involved in IMP (inosine 5'-phosphate) degradation. This is IMP-specific 5'-nucleotidase 1 (ISN1) from Saccharomyces cerevisiae (strain ATCC 204508 / S288c) (Baker's yeast).